The following is a 608-amino-acid chain: FAD-binding monooxygenase ktnD (608 aa).

N-linked (GlcNAc...) asparagine glycosylation is present at N4. A helical transmembrane segment spans residues 17-37; sequence ATVVIIGAGVSGMCMAIDLLH. FAD-binding positions include 56–59, 68–69, and Y74; these read TWAN and DV. 66–68 is a binding site for NADP(+); it reads ASD. An N-linked (GlcNAc...) asparagine glycan is attached at N114. NADP(+)-binding positions include 201–207 and 224–225; these read NGASAIQ and RS. An N-linked (GlcNAc...) asparagine glycan is attached at N325. A helical transmembrane segment spans residues 535–555; sequence ALVSNVTLFLGVALAAGGVYW.

It belongs to the FAD-binding monooxygenase family. FAD serves as cofactor.

The protein localises to the membrane. Its function is as follows. Non-reducing polyketide synthase; part of the gene cluster that mediates the biosynthesis of the bicoumarin kotanin. The non-reducing polyketide synthase ktnS first catalyzes the formation of the pentaketidic 4,7-dihydroxy-5-methylcoumarin from acetyl coenzyme A and 4 malonyl coenzyme A molecules. Further O-methylation by ktnB leads to the formation of 7-demethylsiderin. Then, an oxidative phenol coupling catalyzed by the cytochrome P450 monooxygenase ktnC forms the 8,8'-dimer P-orlandin via dimerization the monomeric precursor, 7-demethylsiderin. P-orlandin is subsequently O-methylated in a stepwise fashion to demethylkotanin and kotanin. The function of ktnD within the pathway has not been determined yet. The polypeptide is FAD-binding monooxygenase ktnD (Aspergillus niger (strain ATCC MYA-4892 / CBS 513.88 / FGSC A1513)).